A 205-amino-acid polypeptide reads, in one-letter code: ATP synthase subunit b 1 (205 aa).

Residues 1-15 (MFVSTAFAQTATESQ) are compositionally biased toward polar residues. The disordered stretch occupies residues 1–26 (MFVSTAFAQTATESQPAPAAGEHGAA). Residues 16 to 26 (PAPAAGEHGAA) show a composition bias toward low complexity. The chain crosses the membrane as a helical span at residues 56–78 (SQILWLAITFGLFYLFMSRVVLP).

This sequence belongs to the ATPase B chain family. In terms of assembly, F-type ATPases have 2 components, F(1) - the catalytic core - and F(0) - the membrane proton channel. F(1) has five subunits: alpha(3), beta(3), gamma(1), delta(1), epsilon(1). F(0) has three main subunits: a(1), b(2) and c(10-14). The alpha and beta chains form an alternating ring which encloses part of the gamma chain. F(1) is attached to F(0) by a central stalk formed by the gamma and epsilon chains, while a peripheral stalk is formed by the delta and b chains.

It localises to the cell inner membrane. Its function is as follows. F(1)F(0) ATP synthase produces ATP from ADP in the presence of a proton or sodium gradient. F-type ATPases consist of two structural domains, F(1) containing the extramembraneous catalytic core and F(0) containing the membrane proton channel, linked together by a central stalk and a peripheral stalk. During catalysis, ATP synthesis in the catalytic domain of F(1) is coupled via a rotary mechanism of the central stalk subunits to proton translocation. In terms of biological role, component of the F(0) channel, it forms part of the peripheral stalk, linking F(1) to F(0). This chain is ATP synthase subunit b 1, found in Brucella anthropi (strain ATCC 49188 / DSM 6882 / CCUG 24695 / JCM 21032 / LMG 3331 / NBRC 15819 / NCTC 12168 / Alc 37) (Ochrobactrum anthropi).